The primary structure comprises 318 residues: NADH-ubiquinone oxidoreductase chain 1 (318 aa).

Helical transmembrane passes span 3-23 (TTNILCLIIPILLAVAFLTLV), 69-89 (FMFTIAPTLALTLALTLWIPL), 100-120 (LGILFILAVSSLAVYSILWSG), 135-155 (AVAQTISYEVTLAIILLSLVL), 171-191 (HMWLVLPTWPLTMMWFTSTLA), 213-233 (VEYAAGPFALFFMAEYANIIL), 253-273 (ELHTINFITKTLILTTMFLWI), and 294-314 (LPLTLAMCMWHVSTSISFASI).

Belongs to the complex I subunit 1 family.

The protein localises to the mitochondrion inner membrane. It carries out the reaction a ubiquinone + NADH + 5 H(+)(in) = a ubiquinol + NAD(+) + 4 H(+)(out). Core subunit of the mitochondrial membrane respiratory chain NADH dehydrogenase (Complex I) that is believed to belong to the minimal assembly required for catalysis. Complex I functions in the transfer of electrons from NADH to the respiratory chain. The immediate electron acceptor for the enzyme is believed to be ubiquinone. The sequence is that of NADH-ubiquinone oxidoreductase chain 1 (MT-ND1) from Choloepus didactylus (Southern two-toed sloth).